A 362-amino-acid chain; its full sequence is Adenosine deaminase (362 aa).

Zn(2+) contacts are provided by His-19 and His-21. Substrate is bound by residues His-21, Asp-23, and Gly-181. His-208 contributes to the Zn(2+) binding site. Glu-211 serves as the catalytic Proton donor. Asp-300 contacts Zn(2+).

It belongs to the metallo-dependent hydrolases superfamily. Adenosine and AMP deaminases family. Adenosine deaminase subfamily. Requires Zn(2+) as cofactor.

The catalysed reaction is adenosine + H2O + H(+) = inosine + NH4(+). The enzyme catalyses 2'-deoxyadenosine + H2O + H(+) = 2'-deoxyinosine + NH4(+). Its function is as follows. Catalyzes the hydrolytic deamination of adenosine and 2-deoxyadenosine. This chain is Adenosine deaminase, found in Mycobacteroides abscessus (strain ATCC 19977 / DSM 44196 / CCUG 20993 / CIP 104536 / JCM 13569 / NCTC 13031 / TMC 1543 / L948) (Mycobacterium abscessus).